Here is a 667-residue protein sequence, read N- to C-terminus: Leucine-rich repeat-containing protein 43 (667 aa).

Polar residues predominate over residues 1–11 (METSESSTSDY). Positions 1 to 24 (METSESSTSDYRQTEGEGEGVPGT) are disordered. LRR repeat units follow at residues 148–169 (KLEELVLSANKIEEIDANNLPP), 170–191 (TLKVLELYGNLIASMECLCSAP), 194–213 (RLQHLGLGHNKLLGPLESLY), and 221–242 (QLVSLDLGFNNLTDLQNMILGL). One can recognise an LRRCT domain in the interval 256-294 (NPLSLVPYYRGFTIDSLAHLCVLDDITVSPNEKHQFRGL). Disordered stretches follow at residues 374-407 (FSGTDEEDQQEDPLDGRHRHRGRQRFHPGSTEEM), 533-570 (ESPLPAKKGKDNNKKKEPAKDKVHKKKKEPPRELRQDP), and 616-640 (SKKVKKSLKKDRSKTVPPTMESGYQ). The segment covering 377–386 (TDEEDQQEDP) has biased composition (acidic residues). A compositionally biased stretch (basic residues) spans 390-399 (RHRHRGRQRF). Over residues 540–553 (KGKDNNKKKEPAKD) the composition is skewed to basic and acidic residues. The segment covering 617–627 (KKVKKSLKKDR) has biased composition (basic residues).

This Mus musculus (Mouse) protein is Leucine-rich repeat-containing protein 43 (Lrrc43).